The sequence spans 369 residues: Terpene cyclase DEP1 (369 aa).

A run of 8 helical transmembrane segments spans residues 9-29, 82-102, 118-138, 157-177, 190-210, 234-254, 298-318, and 342-362; these read FFYL…FNGM, LLFF…LIES, AMVL…LYLV, ALLV…VPAW, IALF…LASI, LVLA…GALI, LFSQ…SHLL, and LVYL…SFAL.

Belongs to the membrane-bound ascI terpene cyclase family.

The protein resides in the membrane. Its pathway is polyketide biosynthesis. Functionally, part of the gene cluster that mediates the biosynthesis of depudecin, a highly oxidized eleven-carbon linear polyketide that acts as a histone deacetylase (HDAC) inhibitor and makes a small contribution to pathogenesis. The reducing polyketide synthase DEP5 is the central enzyme in depudecin biosynthesis by yielding the backbone polyketide chain. The monooxygenases DEP2 and DEP4, as well as the uncharacterized protein DEP1, then act as tailoring enzymes to modify the intermediate polyketide chain into depudecin. The sequence is that of Terpene cyclase DEP1 from Alternaria brassicicola (Dark leaf spot agent).